We begin with the raw amino-acid sequence, 418 residues long: UDP-N-acetyl-D-mannosamine dehydrogenase (418 aa).

NAD(+) is bound by residues Tyr10, Ile11, Asp30, Thr85, and Thr119. Residues Arg152, Val153, Lys204, Asn208, Arg211, His242, Arg244, Thr249, and Gly255 each coordinate UDP-N-acetyl-alpha-D-mannosaminouronate. Lys204 acts as the Proton donor/acceptor in catalysis. Cys258 serves as the catalytic Nucleophile. Position 261 (Lys261) interacts with NAD(+). UDP-N-acetyl-alpha-D-mannosaminouronate contacts are provided by Tyr318 and Lys319. Arg326 contributes to the NAD(+) binding site. Arg398 is a UDP-N-acetyl-alpha-D-mannosaminouronate binding site.

The protein belongs to the UDP-glucose/GDP-mannose dehydrogenase family. In terms of assembly, homodimer.

It carries out the reaction UDP-N-acetyl-alpha-D-mannosamine + 2 NAD(+) + H2O = UDP-N-acetyl-alpha-D-mannosaminouronate + 2 NADH + 3 H(+). Its function is as follows. Catalyzes the four-electron oxidation of UDP-N-acetyl-D-mannosamine (UDP-ManNAc), reducing NAD(+) and releasing UDP-N-acetylmannosaminuronic acid (UDP-ManNAcA). This is UDP-N-acetyl-D-mannosamine dehydrogenase from Pyrococcus horikoshii (strain ATCC 700860 / DSM 12428 / JCM 9974 / NBRC 100139 / OT-3).